Reading from the N-terminus, the 179-residue chain is Large ribosomal subunit protein uL6 (179 aa).

The protein belongs to the universal ribosomal protein uL6 family. As to quaternary structure, part of the 50S ribosomal subunit.

In terms of biological role, this protein binds to the 23S rRNA, and is important in its secondary structure. It is located near the subunit interface in the base of the L7/L12 stalk, and near the tRNA binding site of the peptidyltransferase center. The protein is Large ribosomal subunit protein uL6 of Streptomyces avermitilis (strain ATCC 31267 / DSM 46492 / JCM 5070 / NBRC 14893 / NCIMB 12804 / NRRL 8165 / MA-4680).